The sequence spans 422 residues: Transcription termination factor Rho 1 (422 aa).

The Rho RNA-BD domain occupies 49 to 124 (AAIGGGVVEI…VKAHSINFTD (76 aa)). ATP-binding positions include 173–178 (GKGQRA), 185–190 (RAGKTI), and Arg216.

This sequence belongs to the Rho family. Homohexamer. The homohexamer assembles into an open ring structure.

Functionally, facilitates transcription termination by a mechanism that involves Rho binding to the nascent RNA, activation of Rho's RNA-dependent ATPase activity, and release of the mRNA from the DNA template. The sequence is that of Transcription termination factor Rho 1 from Ehrlichia chaffeensis (strain ATCC CRL-10679 / Arkansas).